The chain runs to 280 residues: Ribosomal protein L11 methyltransferase (280 aa).

S-adenosyl-L-methionine contacts are provided by Thr130, Gly151, Asp172, and Asn213.

This sequence belongs to the methyltransferase superfamily. PrmA family.

The protein localises to the cytoplasm. The catalysed reaction is L-lysyl-[protein] + 3 S-adenosyl-L-methionine = N(6),N(6),N(6)-trimethyl-L-lysyl-[protein] + 3 S-adenosyl-L-homocysteine + 3 H(+). Functionally, methylates ribosomal protein L11. This chain is Ribosomal protein L11 methyltransferase, found in Nitratiruptor sp. (strain SB155-2).